Reading from the N-terminus, the 83-residue chain is Small ribosomal subunit protein uS17 (83 aa).

The protein belongs to the universal ribosomal protein uS17 family. Part of the 30S ribosomal subunit.

Functionally, one of the primary rRNA binding proteins, it binds specifically to the 5'-end of 16S ribosomal RNA. In Chlamydia trachomatis serovar L2 (strain ATCC VR-902B / DSM 19102 / 434/Bu), this protein is Small ribosomal subunit protein uS17.